An 87-amino-acid chain; its full sequence is Phosphoribosyl-ATP pyrophosphatase (87 aa).

This sequence belongs to the PRA-PH family.

The protein localises to the cytoplasm. The enzyme catalyses 1-(5-phospho-beta-D-ribosyl)-ATP + H2O = 1-(5-phospho-beta-D-ribosyl)-5'-AMP + diphosphate + H(+). It functions in the pathway amino-acid biosynthesis; L-histidine biosynthesis; L-histidine from 5-phospho-alpha-D-ribose 1-diphosphate: step 2/9. The sequence is that of Phosphoribosyl-ATP pyrophosphatase from Corynebacterium diphtheriae (strain ATCC 700971 / NCTC 13129 / Biotype gravis).